The primary structure comprises 294 residues: MVRSYIPLNSLRAFEAAARQLSFTKAAIELNVTHAAISQQVKALEQRLNCRLFIRISRGLVLTTEGENLLPILNDSFDRIADTLDRFSTGIIREKVRVGVVGTFATGYLLSRLRDFQQHSPHVDILLSTHNNRVDVVAEGLDYAIRYGNGALAWHESHFMYAPPLAQLCAPSISKRFTPPTDLQRFMLLGSYRAMNWSAWFAAAGGSVPSPSQQIMMFDSSVSMLEAAQAEIGIALAPPAMFMHLLRSERIIQPFSTTVSLGGYWLTRLQSRTETPAMRDFALWLLSEMKSEGE.

Residues 6-63 (IPLNSLRAFEAAARQLSFTKAAIELNVTHAAISQQVKALEQRLNCRLFIRISRGLVLT) form the HTH lysR-type domain. The H-T-H motif DNA-binding region spans 23–42 (FTKAAIELNVTHAAISQQVK).

The protein belongs to the LysR transcriptional regulatory family.

The protein localises to the cytoplasm. Functionally, this protein is a positive regulator of gene expression of beta-lactamase (AmpC). This is HTH-type transcriptional activator AmpR (ampR) from Yersinia enterocolitica.